The primary structure comprises 145 residues: D-aminoacyl-tRNA deacylase (145 aa).

Positions 137–138 match the Gly-cisPro motif, important for rejection of L-amino acids motif; it reads GP.

It belongs to the DTD family. As to quaternary structure, homodimer.

The protein resides in the cytoplasm. The catalysed reaction is glycyl-tRNA(Ala) + H2O = tRNA(Ala) + glycine + H(+). It carries out the reaction a D-aminoacyl-tRNA + H2O = a tRNA + a D-alpha-amino acid + H(+). An aminoacyl-tRNA editing enzyme that deacylates mischarged D-aminoacyl-tRNAs. Also deacylates mischarged glycyl-tRNA(Ala), protecting cells against glycine mischarging by AlaRS. Acts via tRNA-based rather than protein-based catalysis; rejects L-amino acids rather than detecting D-amino acids in the active site. By recycling D-aminoacyl-tRNA to D-amino acids and free tRNA molecules, this enzyme counteracts the toxicity associated with the formation of D-aminoacyl-tRNA entities in vivo and helps enforce protein L-homochirality. The protein is D-aminoacyl-tRNA deacylase of Ruegeria pomeroyi (strain ATCC 700808 / DSM 15171 / DSS-3) (Silicibacter pomeroyi).